The chain runs to 307 residues: 1D-myo-inositol 2-acetamido-2-deoxy-alpha-D-glucopyranoside deacetylase 1 (307 aa).

Zn(2+) is bound by residues H21, D24, and H157.

The protein belongs to the MshB deacetylase family. The cofactor is Zn(2+).

The enzyme catalyses 1D-myo-inositol 2-acetamido-2-deoxy-alpha-D-glucopyranoside + H2O = 1D-myo-inositol 2-amino-2-deoxy-alpha-D-glucopyranoside + acetate. Its function is as follows. Catalyzes the deacetylation of 1D-myo-inositol 2-acetamido-2-deoxy-alpha-D-glucopyranoside (GlcNAc-Ins) in the mycothiol biosynthesis pathway. The sequence is that of 1D-myo-inositol 2-acetamido-2-deoxy-alpha-D-glucopyranoside deacetylase 1 from Frankia casuarinae (strain DSM 45818 / CECT 9043 / HFP020203 / CcI3).